Reading from the N-terminus, the 468-residue chain is 3-isopropylmalate dehydratase large subunit (468 aa).

3 residues coordinate [4Fe-4S] cluster: Cys-347, Cys-407, and Cys-410.

The protein belongs to the aconitase/IPM isomerase family. LeuC type 1 subfamily. Heterodimer of LeuC and LeuD. It depends on [4Fe-4S] cluster as a cofactor.

It carries out the reaction (2R,3S)-3-isopropylmalate = (2S)-2-isopropylmalate. Its pathway is amino-acid biosynthesis; L-leucine biosynthesis; L-leucine from 3-methyl-2-oxobutanoate: step 2/4. Catalyzes the isomerization between 2-isopropylmalate and 3-isopropylmalate, via the formation of 2-isopropylmaleate. The polypeptide is 3-isopropylmalate dehydratase large subunit (Rippkaea orientalis (strain PCC 8801 / RF-1) (Cyanothece sp. (strain PCC 8801))).